The chain runs to 145 residues: Deoxyuridine 5'-triphosphate nucleotidohydrolase (145 aa).

Residues 65 to 67, Asn78, 82 to 84, and Lys92 each bind substrate; these read RSG and TID.

The protein belongs to the dUTPase family. Mg(2+) serves as cofactor.

It catalyses the reaction dUTP + H2O = dUMP + diphosphate + H(+). It functions in the pathway pyrimidine metabolism; dUMP biosynthesis; dUMP from dCTP (dUTP route): step 2/2. Its function is as follows. This enzyme is involved in nucleotide metabolism: it produces dUMP, the immediate precursor of thymidine nucleotides and it decreases the intracellular concentration of dUTP so that uracil cannot be incorporated into DNA. The polypeptide is Deoxyuridine 5'-triphosphate nucleotidohydrolase (Syntrophomonas wolfei subsp. wolfei (strain DSM 2245B / Goettingen)).